The primary structure comprises 246 residues: Sugar fermentation stimulation protein homolog (246 aa).

It belongs to the SfsA family.

The protein is Sugar fermentation stimulation protein homolog of Prochlorococcus marinus (strain MIT 9215).